A 216-amino-acid chain; its full sequence is MGQKINPLGFRLGTTQDHHSLWFSQPKNYSESLQEDKKIRDFINNYVKKNMRKASGAEGIARISIQKRIDLIQVVIFMGFPKFLIETRPQGIEELQRTLQKEFNCGNQKLNITITRIEKPYGNPNILAEFIAVQLKNRVSFRKAIKKAIELAEQADTKGIQVQIAGRIDGKEIARVEWIREGRVPRQTIRANLDYSSYPVRTIYGVLGIKIWIFID.

In terms of domain architecture, KH type-2 spans 43–118 (INNYVKKNMR…KLNITITRIE (76 aa)).

This sequence belongs to the universal ribosomal protein uS3 family. In terms of assembly, part of the 30S ribosomal subunit.

It localises to the plastid. The sequence is that of Small ribosomal subunit protein uS3c (rps3) from Cuscuta reflexa (Southern Asian dodder).